The following is a 298-amino-acid chain: Probable D,D-dipeptide transport system permease protein DdpC (298 aa).

At 1–33 the chain is on the cytoplasmic side; it reads MMLSEETSAVRPQKQTRFNGAKLVWMLKGSPLT. The chain crosses the membrane as a helical span at residues 34-54; sequence VTSAVIIVLMLLMMIFSPWLA. Residues 55–96 are Periplasmic-facing; the sequence is THDPNAIDLTARLLPPSAAHWFGTDEVGRDLFSRVLVGSQQS. A helical membrane pass occupies residues 97-117; sequence ILAGLVVVAIAGMIGSLLGCL. Residues 97–282 form the ABC transmembrane type-1 domain; that stretch reads ILAGLVVVAI…LTAVGFNLFG (186 aa). Residues 118-124 lie on the Cytoplasmic side of the membrane; the sequence is SGVLGGR. 2 helical membrane passes run 125 to 145 and 146 to 166; these read ADAIIMRIMDIMLSIPSLVLT and MALAAALGPSLFNAMLAIAIV. Residues 167-217 lie on the Cytoplasmic side of the membrane; that stretch reads RIPFYVRLARGQALVVRQYTYVQAAKTFGASRWHLINWHILRNSLPPLIVQ. The chain crosses the membrane as a helical span at residues 218–238; the sequence is ASLDIGSAILMAATLGFIGLG. The Periplasmic portion of the chain corresponds to 239 to 260; it reads AQQPSAEWGAMVANGRNYVLDQ. The helical transmembrane segment at 261–281 threads the bilayer; that stretch reads WWYCAFPGAAILLTAVGFNLF. The Cytoplasmic portion of the chain corresponds to 282–298; it reads GDGIRDLLDPKAGGKQS.

It belongs to the binding-protein-dependent transport system permease family. OppBC subfamily. In terms of assembly, the complex is composed of two ATP-binding proteins (DdpD and DdpF), two transmembrane proteins (DdpB and DdpC) and a solute-binding protein (DdpA).

The protein resides in the cell inner membrane. In terms of biological role, part of the ABC transporter complex DdpABCDF, which is probably involved in D,D-dipeptide transport. Probably responsible for the translocation of the substrate across the membrane. The polypeptide is Probable D,D-dipeptide transport system permease protein DdpC (ddpC) (Escherichia coli (strain K12)).